We begin with the raw amino-acid sequence, 309 residues long: Protein lifeguard 3 (309 aa).

Disordered stretches follow at residues 1–31 (MSNP…QPSV) and 64–84 (PMNY…SFRP). Basic and acidic residues predominate over residues 70–84 (DYNEEERAGSDSFRP). A phosphoserine mark is found at serine 79 and serine 81. The next 7 membrane-spanning stretches (helical) occupy residues 101 to 121 (YCII…FTFV), 132 to 152 (VAVY…LACC), 163 to 183 (IILL…ISSM), 188 to 208 (AVII…IFCF), 221 to 241 (FCVL…VLIF), 244 to 264 (IYWL…LFLA), and 286 to 306 (GALQ…QLVG).

Belongs to the BI1 family. LFG subfamily. Expressed in most tissues except spleen, thymus and testis.

It is found in the membrane. The protein localises to the lysosome membrane. Its subcellular location is the endosome membrane. Its function is as follows. Negatively regulates aortic matrix metalloproteinase-9 (MMP9) production and may play a protective role in vascular remodeling. The protein is Protein lifeguard 3 (Tmbim1) of Mus musculus (Mouse).